The following is a 430-amino-acid chain: Glucose-6-phosphate isomerase (430 aa).

E284 serves as the catalytic Proton donor. Active-site residues include H305 and K420.

The protein belongs to the GPI family.

Its subcellular location is the cytoplasm. The catalysed reaction is alpha-D-glucose 6-phosphate = beta-D-fructose 6-phosphate. It participates in carbohydrate biosynthesis; gluconeogenesis. Its pathway is carbohydrate degradation; glycolysis; D-glyceraldehyde 3-phosphate and glycerone phosphate from D-glucose: step 2/4. Its function is as follows. Catalyzes the reversible isomerization of glucose-6-phosphate to fructose-6-phosphate. The protein is Glucose-6-phosphate isomerase of Mycoplasmopsis synoviae (strain 53) (Mycoplasma synoviae).